The sequence spans 214 residues: Adenylate kinase (214 aa).

10 to 15 (GAGKGT) lines the ATP pocket. The tract at residues 30-59 (STGDMLRAAVKAQSELGRQAKALMDAGKLV) is NMP. AMP is bound by residues Thr31, Arg36, 57-59 (KLV), 85-88 (GFPR), and Gln92. An LID region spans residues 122–159 (GRRVHAPSGRVYHVKFNPPKQEGKDDVTGELLTSRKDD). Residues Arg123 and 132–133 (VY) each bind ATP. Residues Arg156 and Arg167 each contribute to the AMP site. ATP is bound at residue Arg200.

The protein belongs to the adenylate kinase family. Monomer.

The protein resides in the cytoplasm. The catalysed reaction is AMP + ATP = 2 ADP. Its pathway is purine metabolism; AMP biosynthesis via salvage pathway; AMP from ADP: step 1/1. Its function is as follows. Catalyzes the reversible transfer of the terminal phosphate group between ATP and AMP. Plays an important role in cellular energy homeostasis and in adenine nucleotide metabolism. This is Adenylate kinase from Sodalis glossinidius (strain morsitans).